We begin with the raw amino-acid sequence, 425 residues long: Formyl-CoA:oxalate CoA-transferase (425 aa).

CoA-binding positions include 17 to 18 (QS), R38, 72 to 75 (LDTK), 96 to 98 (NFG), R104, and 136 to 139 (KVYE). The Nucleophile role is filled by D168. Residue 247–249 (GGQ) participates in substrate binding.

Belongs to the CoA-transferase III family. Frc subfamily. Homodimer.

The enzyme catalyses formyl-CoA + oxalate = oxalyl-CoA + formate. Its pathway is metabolic intermediate degradation; oxalate degradation; CO(2) and formate from oxalate: step 1/2. Involved in the catabolism of oxalate and in the adapatation to low pH via the induction of the oxalate-dependent acid tolerance response (ATR). Catalyzes the transfer of the CoA moiety from formyl-CoA to oxalate. The chain is Formyl-CoA:oxalate CoA-transferase from Bradyrhizobium sp. (strain ORS 278).